Here is a 304-residue protein sequence, read N- to C-terminus: N-acetyl-D-glucosamine kinase (304 aa).

Residues 4-11 (GFDMGGTK) and 133-140 (GLGGGLVI) each bind ATP. Zn(2+)-binding residues include histidine 157, cysteine 177, cysteine 179, and cysteine 184.

This sequence belongs to the ROK (NagC/XylR) family. NagK subfamily.

It catalyses the reaction N-acetyl-D-glucosamine + ATP = N-acetyl-D-glucosamine 6-phosphate + ADP + H(+). Its pathway is cell wall biogenesis; peptidoglycan recycling. In terms of biological role, catalyzes the phosphorylation of N-acetyl-D-glucosamine (GlcNAc) derived from cell-wall degradation, yielding GlcNAc-6-P. In Pectobacterium carotovorum subsp. carotovorum (strain PC1), this protein is N-acetyl-D-glucosamine kinase.